A 245-amino-acid polypeptide reads, in one-letter code: 1-(5-phosphoribosyl)-5-[(5-phosphoribosylamino)methylideneamino] imidazole-4-carboxamide isomerase (245 aa).

Asp7 (proton acceptor) is an active-site residue. Residue Asp129 is the Proton donor of the active site.

The protein belongs to the HisA/HisF family.

The protein resides in the cytoplasm. It carries out the reaction 1-(5-phospho-beta-D-ribosyl)-5-[(5-phospho-beta-D-ribosylamino)methylideneamino]imidazole-4-carboxamide = 5-[(5-phospho-1-deoxy-D-ribulos-1-ylimino)methylamino]-1-(5-phospho-beta-D-ribosyl)imidazole-4-carboxamide. It functions in the pathway amino-acid biosynthesis; L-histidine biosynthesis; L-histidine from 5-phospho-alpha-D-ribose 1-diphosphate: step 4/9. This Escherichia coli O127:H6 (strain E2348/69 / EPEC) protein is 1-(5-phosphoribosyl)-5-[(5-phosphoribosylamino)methylideneamino] imidazole-4-carboxamide isomerase.